A 237-amino-acid chain; its full sequence is Phosphoribosylaminoimidazole-succinocarboxamide synthase (237 aa).

Belongs to the SAICAR synthetase family.

The catalysed reaction is 5-amino-1-(5-phospho-D-ribosyl)imidazole-4-carboxylate + L-aspartate + ATP = (2S)-2-[5-amino-1-(5-phospho-beta-D-ribosyl)imidazole-4-carboxamido]succinate + ADP + phosphate + 2 H(+). Its pathway is purine metabolism; IMP biosynthesis via de novo pathway; 5-amino-1-(5-phospho-D-ribosyl)imidazole-4-carboxamide from 5-amino-1-(5-phospho-D-ribosyl)imidazole-4-carboxylate: step 1/2. The protein is Phosphoribosylaminoimidazole-succinocarboxamide synthase of Deinococcus radiodurans (strain ATCC 13939 / DSM 20539 / JCM 16871 / CCUG 27074 / LMG 4051 / NBRC 15346 / NCIMB 9279 / VKM B-1422 / R1).